The chain runs to 144 residues: Transcriptional regulator SlyA (144 aa).

The region spanning 2–135 (ESTLGSDLAR…LVGLIGKLEQ (134 aa)) is the HTH marR-type domain. The H-T-H motif DNA-binding region spans 49–72 (QIQLAKAIGIEQPSLVRTLDQLEE).

The protein belongs to the SlyA family. Homodimer.

Its function is as follows. Transcription regulator that can specifically activate or repress expression of target genes. The chain is Transcriptional regulator SlyA from Serratia proteamaculans (strain 568).